A 71-amino-acid chain; its full sequence is Large ribosomal subunit protein bL31 (71 aa).

Positions 16, 18, 38, and 41 each coordinate Zn(2+).

This sequence belongs to the bacterial ribosomal protein bL31 family. Type A subfamily. In terms of assembly, part of the 50S ribosomal subunit. Requires Zn(2+) as cofactor.

Binds the 23S rRNA. The polypeptide is Large ribosomal subunit protein bL31 (Chromobacterium violaceum (strain ATCC 12472 / DSM 30191 / JCM 1249 / CCUG 213 / NBRC 12614 / NCIMB 9131 / NCTC 9757 / MK)).